A 486-amino-acid chain; its full sequence is NADH-quinone oxidoreductase subunit N (486 aa).

Helical transmembrane passes span 8 to 28 (FIAL…MLAV), 38 to 58 (ATLS…VLGV), 73 to 93 (ACFY…LAHA), 105 to 125 (LYLL…AQHL), 128 to 148 (LFIG…YAFF), 169 to 189 (FLLF…FAGL), 196 to 216 (HVLS…GLGF), 235 to 255 (PAPV…AVLL), 269 to 289 (LLNI…NLLA), 304 to 324 (IAHL…AVEA), 325 to 345 (VGVY…VITL), 373 to 393 (AVMT…GFIG), 405 to 427 (HLWW…YLRV), and 454 to 474 (IMLV…QPLL).

Belongs to the complex I subunit 2 family. In terms of assembly, NDH-1 is composed of 13 different subunits. Subunits NuoA, H, J, K, L, M, N constitute the membrane sector of the complex.

Its subcellular location is the cell inner membrane. The enzyme catalyses a quinone + NADH + 5 H(+)(in) = a quinol + NAD(+) + 4 H(+)(out). In terms of biological role, NDH-1 shuttles electrons from NADH, via FMN and iron-sulfur (Fe-S) centers, to quinones in the respiratory chain. The immediate electron acceptor for the enzyme in this species is believed to be ubiquinone. Couples the redox reaction to proton translocation (for every two electrons transferred, four hydrogen ions are translocated across the cytoplasmic membrane), and thus conserves the redox energy in a proton gradient. The sequence is that of NADH-quinone oxidoreductase subunit N from Pseudomonas aeruginosa (strain ATCC 15692 / DSM 22644 / CIP 104116 / JCM 14847 / LMG 12228 / 1C / PRS 101 / PAO1).